We begin with the raw amino-acid sequence, 147 residues long: Phospholipase A2 inhibitor subunit B (147 aa).

The C-type lectin domain maps to 62–143 (EICEEAGGHI…DEKLLVVCEF (82 aa)). Cystine bridges form between Cys-64-Cys-141 and Cys-119-Cys-133. Asn-103 is a glycosylation site (N-linked (GlcNAc...) asparagine).

Belongs to the alpha-type phospholipase A2 inhibitor family. In terms of assembly, homo- or heterotrimer; homotrimer of PLI-A chains, two PLI-A and one PLI-B chains, one PLI-A and two PLI-B chains, and homotrimer of PLI-B chains (with a ratio of 1:3:3:1). As to expression, expressed by the liver.

It is found in the secreted. Its function is as follows. PLI binds directly phospholipase A2 in the presence or absence of calcium. Inhibitory activity of the PLI-B homotrimer is less specific than that of the PLI-A homotrimer. This is Phospholipase A2 inhibitor subunit B from Protobothrops flavoviridis (Habu).